The following is a 119-amino-acid chain: Circadian clock oscillator protein KaiB (119 aa).

Belongs to the KaiB family. In terms of assembly, the KaiABC complex composition changes during the circadian cycle to control KaiC phosphorylation. Complexes KaiC(6), KaiA(2-4):KaiC(6), KaiB(6):KaiC(6) and KaiC(6):KaiB(6):KaiA(12) are among the most important forms, many form cooperatively. Undergoes a major conformational rearrangment; in the free state forms homotetramers as a dimer of dimers. When bound to the CI domain of KaiC switches to a monomeric thioredoxin-fold (KaiB(fs)). KaiB(fs) binds CikA, leading it to dephosphorylate phospho-RpaA.

Functionally, key component of the KaiABC oscillator complex, which constitutes the main circadian regulator in cyanobacteria. Complex composition changes during the circadian cycle to control KaiC phosphorylation. KaiA stimulates KaiC autophosphorylation, while KaiB sequesters KaiA, leading to KaiC autodephosphorylation. Phospho-Ser-431 KaiC accumulation triggers binding of KaiB to form the KaiB(6):KaiC(6) complex, leading to changes in output regulators CikA and SasA. KaiB switches to a thioredoxin-like fold (KaiB(fs)) when bound to KaiC. KaiB(6):KaiC(6) formation exposes a site for KaiA binding that sequesters KaiA from KaiC, making the KaiC(6):KaiB(6):KaiA(12) complex that results in KaiC autodephosphorylation. A metamorphic protein which reversibly switches between an inactive tetrameric fold and a rare, thioredoxin-like monomeric fold (KaiB(fs)). KaiB(fs) binds phospho-KaiC, KaiA and CikA. KaiA and CikA compete for binding to KaiB(fs), and KaiB(fs) and SasA compete for binding to KaiC, thus the clock oscillator and output signal pathway are tightly coupled. The chain is Circadian clock oscillator protein KaiB from Synechococcus sp. (strain CC9311).